The sequence spans 288 residues: MKLQIIWLALVLIAVETYAVKQGKNVTIPALIVFGDSIMDTGNNNNLPTLLKCNFPPYGKDYPGGFATGRFSDGRVPSDLIAEKLGLVKTLPAYMNPYLKPHDLLKGVTFASGGTGYDPLTAKIMSVISVWDQLIYFKEYISKIKRHFGEEKAKDILEHSFFLVVSSSNDLAHTYLAQAHRYDRTSYANFLADSAVHFVRELHKLGARKIGVFSAVPVGCVPLQRTVFGGFFTRGCNQPLNNMAKQFNARLSPALDSLDKELDGVIIYINVYDTLFDMIQHPKKYGRF.

The first 19 residues, M1 to A19, serve as a signal peptide directing secretion. N-linked (GlcNAc...) asparagine glycosylation is present at N25. Catalysis depends on S37, which acts as the Nucleophile.

This sequence belongs to the 'GDSL' lipolytic enzyme family.

It localises to the secreted. The sequence is that of GDSL esterase/lipase At3g43550 from Arabidopsis thaliana (Mouse-ear cress).